Here is a 227-residue protein sequence, read N- to C-terminus: Class I hydrophobin 4 (227 aa).

Residues 1-18 (MQFTTFALLAVAAATASA) form the signal peptide. 4 disulfides stabilise this stretch: C159/C207, C167/C200, C168/C186, and C208/C222. N190 and N219 each carry an N-linked (GlcNAc...) asparagine glycan.

It belongs to the fungal hydrophobin family. In terms of assembly, self-assembles to form functional amyloid fibrils called rodlets. Self-assembly into fibrillar rodlets occurs spontaneously at hydrophobic:hydrophilic interfaces and the rodlets further associate laterally to form amphipathic monolayers. In terms of tissue distribution, expressed in conidia and aerial hyphae.

The protein localises to the secreted. The protein resides in the cell wall. In terms of biological role, aerial growth, conidiation, and dispersal of filamentous fungi in the environment rely upon a capability of their secreting small amphipathic proteins called hydrophobins (HPBs) with low sequence identity. Class I can self-assemble into an outermost layer of rodlet bundles on aerial cell surfaces, conferring cellular hydrophobicity that supports fungal growth, development and dispersal; whereas Class II form highly ordered films at water-air interfaces through intermolecular interactions but contribute nothing to the rodlet structure. Hcf-4 is a class I hydrophobin that is involved in the development and germination of conidia. This is Class I hydrophobin 4 from Passalora fulva (Tomato leaf mold).